The sequence spans 70 residues: uncharacterized protein (70 aa).

This is an uncharacterized protein from Acidianus convivator (ATV).